Consider the following 251-residue polypeptide: Cell division protein ZapD (251 aa).

Belongs to the ZapD family. As to quaternary structure, interacts with FtsZ.

Its subcellular location is the cytoplasm. Functionally, cell division factor that enhances FtsZ-ring assembly. Directly interacts with FtsZ and promotes bundling of FtsZ protofilaments, with a reduction in FtsZ GTPase activity. The protein is Cell division protein ZapD of Burkholderia ambifaria (strain MC40-6).